Reading from the N-terminus, the 216-residue chain is MNNLPNAPFAPTEHRLGLYPVVDSLAWISRLLQTGVTTIQLRIKDLPEDQVEEEIQQAIMLGRQYNARLFINDYWRLAIKHGAYGVHLGQEDLVIADLNAIQKTGLRLGISTHDEQELARAKSLRPSYIALGHIFPTTTKAMPSSPQGVEALKRQVENTPDYSTVAIGGISLERVPDVIATGVGSVALVSAITKAKDWRQATAQLLYLVEGIELKG.

4-amino-2-methyl-5-(diphosphooxymethyl)pyrimidine-binding positions include 40–44 (QLRIK) and asparagine 72. Aspartate 73 and aspartate 92 together coordinate Mg(2+). Serine 111 provides a ligand contact to 4-amino-2-methyl-5-(diphosphooxymethyl)pyrimidine. 137–139 (TTT) contacts 2-[(2R,5Z)-2-carboxy-4-methylthiazol-5(2H)-ylidene]ethyl phosphate. Lysine 140 provides a ligand contact to 4-amino-2-methyl-5-(diphosphooxymethyl)pyrimidine. Residues glycine 169 and 189–190 (VS) each bind 2-[(2R,5Z)-2-carboxy-4-methylthiazol-5(2H)-ylidene]ethyl phosphate.

It belongs to the thiamine-phosphate synthase family. Mg(2+) serves as cofactor.

It catalyses the reaction 2-[(2R,5Z)-2-carboxy-4-methylthiazol-5(2H)-ylidene]ethyl phosphate + 4-amino-2-methyl-5-(diphosphooxymethyl)pyrimidine + 2 H(+) = thiamine phosphate + CO2 + diphosphate. It carries out the reaction 2-(2-carboxy-4-methylthiazol-5-yl)ethyl phosphate + 4-amino-2-methyl-5-(diphosphooxymethyl)pyrimidine + 2 H(+) = thiamine phosphate + CO2 + diphosphate. The enzyme catalyses 4-methyl-5-(2-phosphooxyethyl)-thiazole + 4-amino-2-methyl-5-(diphosphooxymethyl)pyrimidine + H(+) = thiamine phosphate + diphosphate. Its pathway is cofactor biosynthesis; thiamine diphosphate biosynthesis; thiamine phosphate from 4-amino-2-methyl-5-diphosphomethylpyrimidine and 4-methyl-5-(2-phosphoethyl)-thiazole: step 1/1. In terms of biological role, condenses 4-methyl-5-(beta-hydroxyethyl)thiazole monophosphate (THZ-P) and 2-methyl-4-amino-5-hydroxymethyl pyrimidine pyrophosphate (HMP-PP) to form thiamine monophosphate (TMP). This chain is Thiamine-phosphate synthase, found in Photorhabdus laumondii subsp. laumondii (strain DSM 15139 / CIP 105565 / TT01) (Photorhabdus luminescens subsp. laumondii).